The sequence spans 1002 residues: Lon protease homolog, mitochondrial (1002 aa).

Residues 102 to 313 (VIALPLPHRP…LTLELVKKEM (212 aa)) enclose the Lon N-terminal domain. An ATP-binding site is contributed by 468–475 (GPPGVGKT). The Lon proteolytic domain occupies 811-995 (QTPVGVVMGL…NEIFDIAFQS (185 aa)). Residues Ser-901 and Lys-944 contribute to the active site.

Belongs to the peptidase S16 family. Homohexamer or homoheptamer. Organized in a ring with a central cavity.

It localises to the mitochondrion matrix. It carries out the reaction Hydrolysis of proteins in presence of ATP.. Functionally, ATP-dependent serine protease that mediates the selective degradation of misfolded, unassembled or oxidatively damaged polypeptides as well as certain short-lived regulatory proteins in the mitochondrial matrix. May also have a chaperone function in the assembly of inner membrane protein complexes. Participates in the regulation of mitochondrial gene expression and in the maintenance of the integrity of the mitochondrial genome. Binds to mitochondrial DNA in a site-specific manner. The sequence is that of Lon protease homolog, mitochondrial from Oryza sativa subsp. indica (Rice).